Reading from the N-terminus, the 180-residue chain is Ribosome-recycling factor (180 aa).

Belongs to the RRF family.

The protein localises to the cytoplasm. Its function is as follows. Responsible for the release of ribosomes from messenger RNA at the termination of protein biosynthesis. May increase the efficiency of translation by recycling ribosomes from one round of translation to another. The protein is Ribosome-recycling factor of Chlamydia caviae (strain ATCC VR-813 / DSM 19441 / 03DC25 / GPIC) (Chlamydophila caviae).